The chain runs to 259 residues: Hydroxyacylglutathione hydrolase (259 aa).

Zn(2+) contacts are provided by H56, H58, D60, H61, H112, D133, and H171.

It belongs to the metallo-beta-lactamase superfamily. Glyoxalase II family. As to quaternary structure, monomer. The cofactor is Zn(2+).

It carries out the reaction an S-(2-hydroxyacyl)glutathione + H2O = a 2-hydroxy carboxylate + glutathione + H(+). It participates in secondary metabolite metabolism; methylglyoxal degradation; (R)-lactate from methylglyoxal: step 2/2. Thiolesterase that catalyzes the hydrolysis of S-D-lactoyl-glutathione to form glutathione and D-lactic acid. This chain is Hydroxyacylglutathione hydrolase, found in Pseudomonas putida (strain ATCC 700007 / DSM 6899 / JCM 31910 / BCRC 17059 / LMG 24140 / F1).